We begin with the raw amino-acid sequence, 395 residues long: Nitrite extrusion protein (395 aa).

Transmembrane regions (helical) follow at residues 15–35, 44–64, 73–93, 96–116, 133–153, 160–180, 203–223, 240–262, 271–291, 293–313, 330–350, and 357–377; these read SLVA…QITL, ISLV…PLGY, LMFM…SIAD, FDLI…SIGV, GIYG…PVIA, STVQ…VLFG, VLWF…AFTI, AGLR…GFLA, LMFV…SPTI, LYTF…GTVF, IVSA…ASVF, and AIGF…VIWM.

Belongs to the major facilitator superfamily. Nitrate/nitrite porter (TC 2.A.1.8) family.

It localises to the cell membrane. Its function is as follows. Involved in excretion of nitrite produced by the dissimilatory reduction of nitrate. The chain is Nitrite extrusion protein (narK) from Bacillus subtilis (strain 168).